Reading from the N-terminus, the 311-residue chain is Aspartate carbamoyltransferase catalytic subunit (311 aa).

Positions 58 and 59 each coordinate carbamoyl phosphate. Lys-86 is an L-aspartate binding site. 3 residues coordinate carbamoyl phosphate: Arg-108, His-136, and Gln-139. L-aspartate-binding residues include Arg-169 and Arg-223. Carbamoyl phosphate contacts are provided by Gly-264 and Pro-265.

Belongs to the aspartate/ornithine carbamoyltransferase superfamily. ATCase family. In terms of assembly, heterododecamer (2C3:3R2) of six catalytic PyrB chains organized as two trimers (C3), and six regulatory PyrI chains organized as three dimers (R2).

The enzyme catalyses carbamoyl phosphate + L-aspartate = N-carbamoyl-L-aspartate + phosphate + H(+). The protein operates within pyrimidine metabolism; UMP biosynthesis via de novo pathway; (S)-dihydroorotate from bicarbonate: step 2/3. Its function is as follows. Catalyzes the condensation of carbamoyl phosphate and aspartate to form carbamoyl aspartate and inorganic phosphate, the committed step in the de novo pyrimidine nucleotide biosynthesis pathway. The polypeptide is Aspartate carbamoyltransferase catalytic subunit (Ruegeria pomeroyi (strain ATCC 700808 / DSM 15171 / DSS-3) (Silicibacter pomeroyi)).